The chain runs to 348 residues: Heat-inducible transcription repressor HrcA (348 aa).

Belongs to the HrcA family.

Its function is as follows. Negative regulator of class I heat shock genes (grpE-dnaK-dnaJ and groELS operons). Prevents heat-shock induction of these operons. The protein is Heat-inducible transcription repressor HrcA of Syntrophobacter fumaroxidans (strain DSM 10017 / MPOB).